Consider the following 42-residue polypeptide: Protein YmiD (42 aa).

The protein is Protein YmiD of Escherichia coli (strain K12).